We begin with the raw amino-acid sequence, 106 residues long: ATP-dependent Clp protease adapter protein ClpS (106 aa).

It belongs to the ClpS family. As to quaternary structure, binds to the N-terminal domain of the chaperone ClpA.

Involved in the modulation of the specificity of the ClpAP-mediated ATP-dependent protein degradation. The sequence is that of ATP-dependent Clp protease adapter protein ClpS from Vibrio parahaemolyticus serotype O3:K6 (strain RIMD 2210633).